Reading from the N-terminus, the 159-residue chain is Transcription elongation factor GreA (159 aa).

It belongs to the GreA/GreB family.

Its function is as follows. Necessary for efficient RNA polymerase transcription elongation past template-encoded arresting sites. The arresting sites in DNA have the property of trapping a certain fraction of elongating RNA polymerases that pass through, resulting in locked ternary complexes. Cleavage of the nascent transcript by cleavage factors such as GreA or GreB allows the resumption of elongation from the new 3'terminus. GreA releases sequences of 2 to 3 nucleotides. The sequence is that of Transcription elongation factor GreA from Orientia tsutsugamushi (strain Ikeda) (Rickettsia tsutsugamushi).